Reading from the N-terminus, the 478-residue chain is Chromosomal replication initiator protein DnaA (478 aa).

The domain I, interacts with DnaA modulators stretch occupies residues 1–71 (MNLTHIWKTT…RNALTRVVGY (71 aa)). Positions 71-136 (YPVQVQVLIA…LDLASAMRSG (66 aa)) are domain II. Residues 137–353 (MLNPRYTFAS…GSLNRVAAYA (217 aa)) form a domain III, AAA+ region region. 4 residues coordinate ATP: Gly-181, Gly-183, Lys-184, and Thr-185. The tract at residues 354–478 (ELNRLPITID…RERIQMMRGL (125 aa)) is domain IV, binds dsDNA.

The protein belongs to the DnaA family. In terms of assembly, oligomerizes as a right-handed, spiral filament on DNA at oriC.

Its subcellular location is the cytoplasm. Functionally, plays an essential role in the initiation and regulation of chromosomal replication. ATP-DnaA binds to the origin of replication (oriC) to initiate formation of the DNA replication initiation complex once per cell cycle. Binds the DnaA box (a 9 base pair repeat at the origin) and separates the double-stranded (ds)DNA. Forms a right-handed helical filament on oriC DNA; dsDNA binds to the exterior of the filament while single-stranded (ss)DNA is stabiized in the filament's interior. The ATP-DnaA-oriC complex binds and stabilizes one strand of the AT-rich DNA unwinding element (DUE), permitting loading of DNA polymerase. After initiation quickly degrades to an ADP-DnaA complex that is not apt for DNA replication. Binds acidic phospholipids. This is Chromosomal replication initiator protein DnaA from Chloroflexus aggregans (strain MD-66 / DSM 9485).